The chain runs to 96 residues: Large ribosomal subunit protein eL21 (96 aa).

Residues 1–66 (MPSSNGPLEG…FDGQTGTVEG (66 aa)) form a disordered region.

Belongs to the eukaryotic ribosomal protein eL21 family. In terms of assembly, part of the 50S ribosomal subunit. Interacts with protein L18 and binds the 5S rRNA. Has been cross-linked to L18.

Functionally, this is one of 5 proteins that mediate the attachment of the 5S rRNA onto the large ribosomal subunit, stabilizing the orientation of adjacent RNA domains. The chain is Large ribosomal subunit protein eL21 (rpl21e) from Haloarcula marismortui (strain ATCC 43049 / DSM 3752 / JCM 8966 / VKM B-1809) (Halobacterium marismortui).